The following is a 79-amino-acid chain: Sec-independent protein translocase protein TatA (79 aa).

Residues 1 to 21 (MGGFTSIWHWVIVLLVIVLLF) form a helical membrane-spanning segment. A disordered region spans residues 54-79 (ELKTLDAQATQTKVHETSEIKSKQES). The segment covering 66–79 (KVHETSEIKSKQES) has biased composition (basic and acidic residues).

Belongs to the TatA/E family. As to quaternary structure, the Tat system comprises two distinct complexes: a TatABC complex, containing multiple copies of TatA, TatB and TatC subunits, and a separate TatA complex, containing only TatA subunits. Substrates initially bind to the TatABC complex, which probably triggers association of the separate TatA complex to form the active translocon.

It is found in the cell inner membrane. In terms of biological role, part of the twin-arginine translocation (Tat) system that transports large folded proteins containing a characteristic twin-arginine motif in their signal peptide across membranes. TatA could form the protein-conducting channel of the Tat system. The polypeptide is Sec-independent protein translocase protein TatA (Helicobacter pylori (strain J99 / ATCC 700824) (Campylobacter pylori J99)).